The chain runs to 158 residues: MGSGSSRSSRTLRRRRSPESLPAGPGAAALEGGTRRRVPVAAAEVPGAAAEEAPGRDPSPVAPPDGRDETLRLLDELLAESAAWGPPEPAPRRPARLRPTAVAGSAVCAEQSTEGHPGSGNVSEAPGSGRKKPERPAAISYDHSEEGLMASIEREYCR.

Positions 1–146 (MGSGSSRSSR…AAISYDHSEE (146 aa)) are disordered. The N-myristoyl glycine moiety is linked to residue glycine 2. 2 stretches are compositionally biased toward low complexity: residues 19–32 (ESLP…ALEG) and 39–52 (PVAA…AAEE). Positions 29–33 (ALEGG) match the Ciliary targeting motif motif. Residues 65–75 (DGRDETLRLLD) are compositionally biased toward basic and acidic residues.

In terms of assembly, interacts (when myristoylated) with UNC119 and UNC119B; interaction is required for localization to cilium. Expressed at high levels in the kidney and pancreas. Moderate expression seen in the skeletal muscle, liver and heart. A weak expression seen in the brain, lung, uterus, prostate, testis, small intestine and colon.

The protein localises to the cell projection. It is found in the cilium membrane. It localises to the cytoplasm. The protein resides in the cytoskeleton. Its subcellular location is the cilium axoneme. The polypeptide is Cystin-1 (CYS1) (Homo sapiens (Human)).